The primary structure comprises 211 residues: Thiamine-phosphate synthase (211 aa).

4-amino-2-methyl-5-(diphosphooxymethyl)pyrimidine-binding positions include 37–41 (QLRIK) and N69. Residues D70 and D89 each contribute to the Mg(2+) site. 4-amino-2-methyl-5-(diphosphooxymethyl)pyrimidine is bound at residue S108. 134 to 136 (TQT) contacts 2-[(2R,5Z)-2-carboxy-4-methylthiazol-5(2H)-ylidene]ethyl phosphate. K137 is a binding site for 4-amino-2-methyl-5-(diphosphooxymethyl)pyrimidine. 2-[(2R,5Z)-2-carboxy-4-methylthiazol-5(2H)-ylidene]ethyl phosphate contacts are provided by residues G166 and 186 to 187 (VS).

Belongs to the thiamine-phosphate synthase family. The cofactor is Mg(2+).

The catalysed reaction is 2-[(2R,5Z)-2-carboxy-4-methylthiazol-5(2H)-ylidene]ethyl phosphate + 4-amino-2-methyl-5-(diphosphooxymethyl)pyrimidine + 2 H(+) = thiamine phosphate + CO2 + diphosphate. It carries out the reaction 2-(2-carboxy-4-methylthiazol-5-yl)ethyl phosphate + 4-amino-2-methyl-5-(diphosphooxymethyl)pyrimidine + 2 H(+) = thiamine phosphate + CO2 + diphosphate. It catalyses the reaction 4-methyl-5-(2-phosphooxyethyl)-thiazole + 4-amino-2-methyl-5-(diphosphooxymethyl)pyrimidine + H(+) = thiamine phosphate + diphosphate. Its pathway is cofactor biosynthesis; thiamine diphosphate biosynthesis; thiamine phosphate from 4-amino-2-methyl-5-diphosphomethylpyrimidine and 4-methyl-5-(2-phosphoethyl)-thiazole: step 1/1. Functionally, condenses 4-methyl-5-(beta-hydroxyethyl)thiazole monophosphate (THZ-P) and 2-methyl-4-amino-5-hydroxymethyl pyrimidine pyrophosphate (HMP-PP) to form thiamine monophosphate (TMP). This chain is Thiamine-phosphate synthase, found in Salmonella newport (strain SL254).